Reading from the N-terminus, the 325-residue chain is GMP reductase (325 aa).

Cys174 serves as the catalytic Thioimidate intermediate. 203–226 provides a ligand contact to NADP(+); that stretch reads LIADGGIRTHGDIAKSIRFGASMV.

The protein belongs to the IMPDH/GMPR family. GuaC type 2 subfamily.

The catalysed reaction is IMP + NH4(+) + NADP(+) = GMP + NADPH + 2 H(+). Catalyzes the irreversible NADPH-dependent deamination of GMP to IMP. It functions in the conversion of nucleobase, nucleoside and nucleotide derivatives of G to A nucleotides, and in maintaining the intracellular balance of A and G nucleotides. This chain is GMP reductase, found in Staphylococcus aureus (strain bovine RF122 / ET3-1).